Consider the following 393-residue polypeptide: MSDETRVGEAAEQAATPEKIRKGSARRERGNRTGFTTGACSAAAARAATLGLLLSEVPDTVICRLPNGQEQAFAVTDGCVEESSGLAHAVIIKDAGDDPDATHGAHMTADVRLLPDRAGEIVLKGGFGVGVVTKDGLGLEVGGPAINPVPRRNILDNVRAVAGELLDHDGLEVTISVPGGDEMAKKTLNARLGILGGISILGTTGIVRPYSTAAFRASVVQAVDVAAKQGQTSVVFTTGGRTEKFAMRQLPDLDESCFVQMGDFVKAAFSSAIKHKLPTVYVGAMVGKLTKMCQGLAVTHAWKAEVDRDILADSAREVGAPDDLIEEIRSAETARFAAERLASLGLAVTFHRQLAIKAIRSLKDKYPGNYRLAVLVCDFEGQFICRVNEDEAL.

The segment at methionine 1–phenylalanine 35 is disordered. The span at glutamate 18–asparagine 31 shows a compositional bias: basic and acidic residues.

The protein belongs to the CbiD family.

The catalysed reaction is Co-precorrin-5B + S-adenosyl-L-methionine = Co-precorrin-6A + S-adenosyl-L-homocysteine. It participates in cofactor biosynthesis; adenosylcobalamin biosynthesis; cob(II)yrinate a,c-diamide from sirohydrochlorin (anaerobic route): step 6/10. Its function is as follows. Catalyzes the methylation of C-1 in cobalt-precorrin-5B to form cobalt-precorrin-6A. The polypeptide is Cobalt-precorrin-5B C(1)-methyltransferase (Dechloromonas aromatica (strain RCB)).